Here is a 110-residue protein sequence, read N- to C-terminus: Large ribosomal subunit protein uL22 (110 aa).

It belongs to the universal ribosomal protein uL22 family. In terms of assembly, part of the 50S ribosomal subunit.

Functionally, this protein binds specifically to 23S rRNA; its binding is stimulated by other ribosomal proteins, e.g. L4, L17, and L20. It is important during the early stages of 50S assembly. It makes multiple contacts with different domains of the 23S rRNA in the assembled 50S subunit and ribosome. Its function is as follows. The globular domain of the protein is located near the polypeptide exit tunnel on the outside of the subunit, while an extended beta-hairpin is found that lines the wall of the exit tunnel in the center of the 70S ribosome. This Pseudoalteromonas translucida (strain TAC 125) protein is Large ribosomal subunit protein uL22.